The primary structure comprises 549 residues: MGRGSVTSLAPGFRFHPTDEELVRYYLKRKICNKPFKFDAISVTDVYKSEPWDLPDKSRLKSRDLEWYFFSMLDKKYRNGSKTNRATEMGYWKTTGKDREILNGSKVVGMKKTLVYHKGRAPRGERTNWVMHEYRLVDQDLDKTGVHQDAFVLCRIFQKSGSGPKNGEQYGAPFVEEEWEEEDDMTFVPDQEDLGSEDHVYVHMDDIDQKSENFVVYDAIPIPLNFIHGESSNNVETNYSDSINYIQQTGNYMDSGGYFEQPAESYEKDQKPIIRDRDGSLQNEGIGCGVQDKHSETLQSSDNIFGTDTSCYNDFPVESNYLIGEAFLDPNSNLLENDGLYLETNDLSSTQQDGFDFEDYLTFFDETFDPSQLMGNEDVFFDQEELFQEVETKELEKEETSRSKHVVEEKEKDEASCSKQVDADATEFEPDYKYPLLKKASHMLGAIPAPLANASEFPTKDAAIRLHAAQSSGSVHVTAGMITISDSNMGWSYGKNENLDLILSLGLVQGNTAPEKSGNSSAWAMLIFMCFWVLLLSVSFKVSILVSSR.

One can recognise an NAC domain in the interval 9 to 159 (LAPGFRFHPT…AFVLCRIFQK (151 aa)). The DNA-binding element occupies 108 to 165 (VGMKKTLVYHKGRAPRGERTNWVMHEYRLVDQDLDKTGVHQDAFVLCRIFQKSGSGPK). The segment covering 395 to 416 (LEKEETSRSKHVVEEKEKDEAS) has biased composition (basic and acidic residues). The segment at 395–418 (LEKEETSRSKHVVEEKEKDEASCS) is disordered. The chain crosses the membrane as a helical span at residues 526–546 (LIFMCFWVLLLSVSFKVSILV).

Expressed in roots, rosette leaves, cauline leaves, shoot apex and stems.

Its subcellular location is the endoplasmic reticulum membrane. It is found in the nucleus. Transcriptional activator activated by proteolytic cleavage through regulated intramembrane proteolysis (RIP). Promotes reactive oxygen species (ROS) production during drought-induced leaf senescence. In response to abscisic acid (ABA)-mediated drought stress signals, binds directly to the promoters of RBOHC and RBOHE genes, encoding ROS biosynthetic enzymes, resulting in ROS accumulation and triggering leaf senescence via programmed cell death (PCD). ROS-induced leaf senescence sustains plant survival under drought conditions. Involved in heat stress response. Modulates PCD through a ROS-mediated positive feedback control under heat stress conditions. This may provide an adaptation strategy for plant survival under extreme heat stress conditions. Acts as a repressor in preventing anther dehiscence during stamen development by suppressing genes that participate in jasmonic acid (JA) biosynthesis, such as DAD1, AOS, AOC3, OPR3 and 4CLL5/OPCL1. The chain is NAC domain-containing protein 53 from Arabidopsis thaliana (Mouse-ear cress).